Reading from the N-terminus, the 298-residue chain is Probable phosphite transport system-binding protein HtxB (298 aa).

An N-terminal signal peptide occupies residues 1-33; that stretch reads MQVFTLFSKFKKALTRAILAFIATIIVCTPAQA.

This sequence belongs to the phosphate/phosphite/phosphonate binding protein family.

Functionally, probably forms part of a binding-protein-dependent hypophosphite transporter. The protein is Probable phosphite transport system-binding protein HtxB (htxB) of Stutzerimonas stutzeri (Pseudomonas stutzeri).